The primary structure comprises 708 residues: Vertnin (708 aa).

2 disordered regions span residues 473–499 (PWKG…FLPP) and 561–636 (APAL…PVAE). Basic and acidic residues predominate over residues 568–582 (GLREAKEKQEKEAGR).

This sequence belongs to the vertnin family.

This is Vertnin (VRTN) from Ailuropoda melanoleuca (Giant panda).